The following is a 248-amino-acid chain: Probable transcriptional regulatory protein trd_1132 (248 aa).

The protein belongs to the TACO1 family.

It is found in the cytoplasm. In Thermomicrobium roseum (strain ATCC 27502 / DSM 5159 / P-2), this protein is Probable transcriptional regulatory protein trd_1132.